The sequence spans 322 residues: tRNA-dihydrouridine(16) synthase (322 aa).

Residues 8–10 (PME) and glutamine 69 contribute to the FMN site. The active-site Proton donor is the cysteine 99. FMN is bound by residues lysine 140, 200-202 (NGD), and 224-225 (GR).

Belongs to the Dus family. DusC subfamily. FMN serves as cofactor.

The catalysed reaction is 5,6-dihydrouridine(16) in tRNA + NADP(+) = uridine(16) in tRNA + NADPH + H(+). It carries out the reaction 5,6-dihydrouridine(16) in tRNA + NAD(+) = uridine(16) in tRNA + NADH + H(+). Its function is as follows. Catalyzes the synthesis of 5,6-dihydrouridine (D), a modified base found in the D-loop of most tRNAs, via the reduction of the C5-C6 double bond in target uridines. Specifically modifies U16 in tRNAs. This Cupriavidus necator (strain ATCC 17699 / DSM 428 / KCTC 22496 / NCIMB 10442 / H16 / Stanier 337) (Ralstonia eutropha) protein is tRNA-dihydrouridine(16) synthase.